The sequence spans 360 residues: Magnesium transporter NIPA2 (360 aa).

Residues 1 to 9 lie on the Extracellular side of the membrane; the sequence is MSQGRGKYD. The helical transmembrane segment at 10-30 threads the bilayer; that stretch reads FYIGLGLAMSSSIFIGGSFIL. Residues 31-56 lie on the Cytoplasmic side of the membrane; that stretch reads KKKGLLRLARKGSMRAGQGGHAYLKE. A helical transmembrane segment spans residues 57–77; that stretch reads WLWWAGLLSMGAGEVANFAAY. Ala-78 is a topological domain (extracellular). Residues 79–99 traverse the membrane as a helical segment; sequence FAPATLVTPLGALSVLVSAIL. Residues 100-107 lie on the Cytoplasmic side of the membrane; sequence SSYFLNER. A helical membrane pass occupies residues 108-128; sequence LNLHGKIGCLLSILGSTVMVI. Residues 129 to 149 are Extracellular-facing; that stretch reads HAPKEEEIETLNEMSHKLGDP. Residues 150–170 form a helical membrane-spanning segment; that stretch reads GFVVFATLVVIVALILIFVVG. Topologically, residues 171–175 are cytoplasmic; the sequence is PRHGQ. A helical membrane pass occupies residues 176–196; it reads TNILVYITICSVIGAFSVSCV. Over 197 to 215 the chain is Extracellular; the sequence is KGLGIAIKELFAGKPVLRH. Residues 216 to 236 traverse the membrane as a helical segment; that stretch reads PLAWILLLSLIVCVSTQINYL. At 237–246 the chain is on the cytoplasmic side; that stretch reads NRALDIFNTS. A helical transmembrane segment spans residues 247 to 267; it reads IVTPIYYVFFTTSVLTCSAIL. Topologically, residues 268–278 are extracellular; it reads FKEWQDMPVDD. Residues 279–299 traverse the membrane as a helical segment; that stretch reads VIGTLSGFFTIIVGIFLLHAF. At 300–360 the chain is on the cytoplasmic side; the sequence is KDVSFSLASL…SRRNGNLTAF (61 aa).

Belongs to the NIPA family. As to expression, widely expressed.

It localises to the cell membrane. It is found in the early endosome. The enzyme catalyses Mg(2+)(in) = Mg(2+)(out). Acts as a selective Mg(2+) transporter. This chain is Magnesium transporter NIPA2 (NIPA2), found in Homo sapiens (Human).